The primary structure comprises 194 residues: tRNA (guanosine(18)-2'-O)-methyltransferase (194 aa).

S-adenosyl-L-methionine-binding positions include Thr-99, 122-126 (GAEKW), Ile-142, and Leu-151.

The protein belongs to the class IV-like SAM-binding methyltransferase superfamily. RNA methyltransferase TrmH family. In terms of assembly, monomer.

The catalysed reaction is guanosine(18) in tRNA + S-adenosyl-L-methionine = 2'-O-methylguanosine(18) in tRNA + S-adenosyl-L-homocysteine + H(+). Its activity is regulated as follows. Stimulated by magnesium ions and spermine. Inhibited by S-adenosyl-homocysteine. In terms of biological role, catalyzes the 2'-O methylation of guanosine at position 18 in tRNA. This chain is tRNA (guanosine(18)-2'-O)-methyltransferase, found in Thermus thermophilus (strain ATCC BAA-163 / DSM 7039 / HB27).